The primary structure comprises 352 residues: 4-hydroxy-3-methylbut-2-en-1-yl diphosphate synthase (flavodoxin) (352 aa).

4 residues coordinate [4Fe-4S] cluster: Cys263, Cys266, Cys298, and Glu305.

This sequence belongs to the IspG family. The cofactor is [4Fe-4S] cluster.

The catalysed reaction is (2E)-4-hydroxy-3-methylbut-2-enyl diphosphate + oxidized [flavodoxin] + H2O + 2 H(+) = 2-C-methyl-D-erythritol 2,4-cyclic diphosphate + reduced [flavodoxin]. It functions in the pathway isoprenoid biosynthesis; isopentenyl diphosphate biosynthesis via DXP pathway; isopentenyl diphosphate from 1-deoxy-D-xylulose 5-phosphate: step 5/6. Functionally, converts 2C-methyl-D-erythritol 2,4-cyclodiphosphate (ME-2,4cPP) into 1-hydroxy-2-methyl-2-(E)-butenyl 4-diphosphate. The protein is 4-hydroxy-3-methylbut-2-en-1-yl diphosphate synthase (flavodoxin) of Sulfurimonas denitrificans (strain ATCC 33889 / DSM 1251) (Thiomicrospira denitrificans (strain ATCC 33889 / DSM 1251)).